Consider the following 217-residue polypeptide: Probable transaldolase (217 aa).

Lys-83 (schiff-base intermediate with substrate) is an active-site residue.

It belongs to the transaldolase family. Type 3B subfamily.

Its subcellular location is the cytoplasm. The enzyme catalyses D-sedoheptulose 7-phosphate + D-glyceraldehyde 3-phosphate = D-erythrose 4-phosphate + beta-D-fructose 6-phosphate. Its pathway is carbohydrate degradation; pentose phosphate pathway; D-glyceraldehyde 3-phosphate and beta-D-fructose 6-phosphate from D-ribose 5-phosphate and D-xylulose 5-phosphate (non-oxidative stage): step 2/3. In terms of biological role, transaldolase is important for the balance of metabolites in the pentose-phosphate pathway. The sequence is that of Probable transaldolase from Chelativorans sp. (strain BNC1).